The following is a 173-amino-acid chain: Crossover junction endodeoxyribonuclease RuvC (173 aa).

Residues D8, E67, and D139 contribute to the active site. Residues D8, E67, and D139 each coordinate Mg(2+).

It belongs to the RuvC family. As to quaternary structure, homodimer which binds Holliday junction (HJ) DNA. The HJ becomes 2-fold symmetrical on binding to RuvC with unstacked arms; it has a different conformation from HJ DNA in complex with RuvA. In the full resolvosome a probable DNA-RuvA(4)-RuvB(12)-RuvC(2) complex forms which resolves the HJ. Mg(2+) serves as cofactor.

The protein resides in the cytoplasm. The enzyme catalyses Endonucleolytic cleavage at a junction such as a reciprocal single-stranded crossover between two homologous DNA duplexes (Holliday junction).. Functionally, the RuvA-RuvB-RuvC complex processes Holliday junction (HJ) DNA during genetic recombination and DNA repair. Endonuclease that resolves HJ intermediates. Cleaves cruciform DNA by making single-stranded nicks across the HJ at symmetrical positions within the homologous arms, yielding a 5'-phosphate and a 3'-hydroxyl group; requires a central core of homology in the junction. The consensus cleavage sequence is 5'-(A/T)TT(C/G)-3'. Cleavage occurs on the 3'-side of the TT dinucleotide at the point of strand exchange. HJ branch migration catalyzed by RuvA-RuvB allows RuvC to scan DNA until it finds its consensus sequence, where it cleaves and resolves the cruciform DNA. The protein is Crossover junction endodeoxyribonuclease RuvC of Shewanella baltica (strain OS223).